Reading from the N-terminus, the 634-residue chain is Ras and EF-hand domain-containing protein homolog (634 aa).

EF-hand domains are found at residues 5–33 (EVENLFSLCDSESKGYLTMEDLRKVCPQL) and 33–68 (LDDNDLRFIFTELDQDGSGKIEKLEFLRGFQDTVQH). 5 residues coordinate Ca(2+): Asp46, Asp48, Ser50, Lys52, and Glu57. A coiled-coil region spans residues 169–310 (LSEKKHENER…RCEFDQKQDE (142 aa)). The disordered stretch occupies residues 212–234 (ARQEERDRLTKEKEEMRQRMSDE). GTP-binding positions include 449–454 (AVGKSS), 552–555 (NKVD), and 585–586 (AL). Residues 632–634 (RGS) constitute a propeptide, removed in mature form.

It belongs to the small GTPase superfamily. Rab family. As to quaternary structure, homodimer.

Its subcellular location is the cytoplasm. The protein localises to the perinuclear region. Functionally, binds GTP and GDP. Plays a role in uterine seam cell development. The chain is Ras and EF-hand domain-containing protein homolog from Caenorhabditis elegans.